Consider the following 96-residue polypeptide: Putative regulatory protein DET0036 (96 aa).

It belongs to the RemA family.

In Dehalococcoides mccartyi (strain ATCC BAA-2266 / KCTC 15142 / 195) (Dehalococcoides ethenogenes (strain 195)), this protein is Putative regulatory protein DET0036.